A 784-amino-acid polypeptide reads, in one-letter code: Cation/H(+) antiporter 26 (784 aa).

The next 11 helical transmembrane spans lie at 38-58 (PLLLLLISLVSSLSSVFQALL), 61-81 (LANVDFVTQILAGIFLGPSAL), 97-117 (YFIIESFEAISFMFISYISTA), 130-150 (LAIINGLSLFLFPYVVGAIAC), 201-221 (LALSSIMVANCFGWGFFLLLI), 240-260 (FTKVLLLVGIVVVCRPIFNWI), 286-306 (TFLSETVGFPYVVGSVALGLV), 321-341 (IGSFCYAVLMPCYVIGIGNKV), 351-371 (IISLEFLIFTISAAKFASIVL), 376-396 (FQVPISHAVIVGFIVCIQGIY), and 413-433 (EAFGIMVISAMVHSTIFTAIV).

This sequence belongs to the monovalent cation:proton antiporter 2 (CPA2) transporter (TC 2.A.37) family. CHX (TC 2.A.37.4) subfamily. As to expression, expressed in pollen.

The protein resides in the membrane. Functionally, may operate as a cation/H(+) antiporter. The sequence is that of Cation/H(+) antiporter 26 (CHX26) from Arabidopsis thaliana (Mouse-ear cress).